A 325-amino-acid chain; its full sequence is Apoptosis-enhancing nuclease (325 aa).

The Nucleolar localization signal motif lies at 27–35; that stretch reads RKRHKRRSR. The tract at residues 53 to 105 is disordered; sequence LSMPPEPGSSPLPTPFGAVTATEDASSGKQCPRAGSGGAPCSRRPAPGKASGP. Positions 56 to 66 are enriched in pro residues; sequence PPEPGSSPLPT. The Exonuclease domain maps to 110–266; the sequence is CVAIDCEMVG…EDATTAMELY (157 aa). Residues 165–188 carry the Nuclear localization signal motif; sequence RQHMCKAIPFQVAQKEILKLLKGK. Residues 281 to 325 are disordered; it reads LWTCPEDREPDSSTDMEQYMEDQYWPDDLAHGSRGGAREAQDRRN. A compositionally biased stretch (basic and acidic residues) spans 308–325; it reads DLAHGSRGGAREAQDRRN.

The protein localises to the nucleus. It localises to the nucleolus. In terms of biological role, exonuclease with activity against single- and double-stranded DNA and RNA. Mediates p53-induced apoptosis. When induced by p53 following DNA damage, digests double-stranded DNA to form single-stranded DNA and amplifies DNA damage signals, leading to enhancement of apoptosis. This chain is Apoptosis-enhancing nuclease (AEN), found in Pongo abelii (Sumatran orangutan).